A 38-amino-acid chain; its full sequence is Cytochrome b6-f complex subunit 5 (38 aa).

A helical transmembrane segment spans residues 5-25 (LLCGIVLGLIPVTLLGLFVAA).

Belongs to the PetG family. The 4 large subunits of the cytochrome b6-f complex are cytochrome b6, subunit IV (17 kDa polypeptide, PetD), cytochrome f and the Rieske protein, while the 4 small subunits are PetG, PetL, PetM and PetN. The complex functions as a dimer.

It localises to the cellular thylakoid membrane. Component of the cytochrome b6-f complex, which mediates electron transfer between photosystem II (PSII) and photosystem I (PSI), cyclic electron flow around PSI, and state transitions. PetG is required for either the stability or assembly of the cytochrome b6-f complex. This is Cytochrome b6-f complex subunit 5 from Parasynechococcus marenigrum (strain WH8102).